The following is a 448-amino-acid chain: Tapasin (448 aa).

An N-terminal signal peptide occupies residues 1–20 (MKSLSLLLAVALGLATAVSA). The Lumenal portion of the chain corresponds to 21 to 414 (GPAVIECWFV…LSGPSLEDSV (394 aa)). Cysteine 27 and cysteine 91 form a disulfide bridge. N-linked (GlcNAc...) asparagine glycosylation is present at asparagine 253. The region spanning 292–399 (PKVSLMPATL…PASGRSAEVT (108 aa)) is the Ig-like C1-type domain. Cysteine 315 and cysteine 382 are joined by a disulfide. Residues 415 to 435 (GLFLSAFLLLGLFKALGWAAV) form a helical membrane-spanning segment. Residues 436–448 (YLSTCKDSKKKAE) are Cytoplasmic-facing.

In terms of assembly, heterodimer with PDIA3; disulfide-linked. Obligatory mediator for the interaction between newly assembled MHC class I molecules, calreticulin, PDIA3 and TAP. Up to 4 MHC class I/tapasin complexes bind to 1 TAP. Interacts with HLA-G-B2M complex; this interaction is required for loading of high affinity peptides. On its own or as part of MHC class I peptide loading complex, interacts with ligand-free MR1 or MR1-B2M complex, providing for stable MR1 pools ready for metabolite antigen processing. As to expression, neutrophils, mostly in fully differentiated cells.

It is found in the endoplasmic reticulum membrane. In terms of biological role, involved in the association of MHC class I with transporter associated with antigen processing (TAP) and in the assembly of MHC class I with peptide (peptide loading). The polypeptide is Tapasin (Homo sapiens (Human)).